The sequence spans 316 residues: MNTSITARELFDQQRDKLALRWVAGQKGEHREIQAGSNNARRPSLAGYLNVIYPNKVQILGTEELAWLDSLDARQRWETIEKIIQVQPLALAISKNQSCPEDLGAAADESNTPLWISPKRGHELLNHLSYHLARTLAPRVTLHGVFMEIYSIGVLITGEAGSGKSELALELLSRGHRLVADDAPEFTQIAPDVLDGTCPELLQDLLEVRGLGVLNVRDMFGDTAVKKNKYLRLIVHLTRPMTEPTPSGYERLTGDSGSRHVLDLDVPLITLPVMPGRNLAVLTEAATRLHILRTKGIDPAAMFIARHSNLLERRTP.

Active-site residues include His-143 and Lys-164. 158–165 provides a ligand contact to ATP; the sequence is GEAGSGKS. Ser-165 contributes to the Mg(2+) binding site. The active-site Proton acceptor; for phosphorylation activity. Proton donor; for dephosphorylation activity is Asp-182. The interval 206 to 215 is important for the catalytic mechanism of both phosphorylation and dephosphorylation; it reads LEVRGLGVLN. Glu-207 is a binding site for Mg(2+). Arg-251 is an active-site residue. An important for the catalytic mechanism of dephosphorylation region spans residues 272–277; the sequence is PVMPGR.

It belongs to the HPrK/P family. In terms of assembly, homohexamer. Mg(2+) serves as cofactor.

It carries out the reaction [HPr protein]-L-serine + ATP = [HPr protein]-O-phospho-L-serine + ADP + H(+). The enzyme catalyses [HPr protein]-O-phospho-L-serine + phosphate + H(+) = [HPr protein]-L-serine + diphosphate. Functionally, catalyzes the ATP- as well as the pyrophosphate-dependent phosphorylation of a specific serine residue in HPr, a phosphocarrier protein of the phosphoenolpyruvate-dependent sugar phosphotransferase system (PTS). HprK/P also catalyzes the pyrophosphate-producing, inorganic phosphate-dependent dephosphorylation (phosphorolysis) of seryl-phosphorylated HPr (P-Ser-HPr). This chain is HPr kinase/phosphorylase, found in Xanthomonas oryzae pv. oryzae (strain MAFF 311018).